The following is a 999-amino-acid chain: uncharacterized protein (999 aa).

The segment covering 45-128 has biased composition (low complexity); it reads NSNNIGNGNG…TPTITPSSPS (84 aa). The disordered stretch occupies residues 45-129; it reads NSNNIGNGNG…PTITPSSPSV (85 aa). Residues 723–767 adopt a coiled-coil conformation; sequence YQQSQQQQSQQQQQQQQQQQQQQQQQQQQQQQQQQQQQQQQQQQQ. Residues 873–887 are compositionally biased toward low complexity; that stretch reads NDINNANNSNNNNNN. The tract at residues 873 to 904 is disordered; that stretch reads NDINNANNSNNNNNNQSQVLLSPNRNKDGTLN. Residues 976–996 traverse the membrane as a helical segment; sequence LFSLVLILAFIWFFFEIYFFF.

It is found in the membrane. This is an uncharacterized protein from Dictyostelium discoideum (Social amoeba).